The sequence spans 286 residues: Eukaryotic translation initiation factor 3 subunit J (286 aa).

Disordered stretches follow at residues 1–35 (MSWD…DSWD), 141–162 (AASG…HPLF), and 229–258 (KAER…AVKT). Acidic residues predominate over residues 21–35 (WEEEGNDEPLLDSWD). Residues 35-75 (DIDEEEVARKKKEEEAKKKAEKEALKKKQEESKAKKLSKNK) adopt a coiled-coil conformation.

Belongs to the eIF-3 subunit J family. As to quaternary structure, component of the eukaryotic translation initiation factor 3 (eIF-3) complex.

The protein resides in the cytoplasm. Its function is as follows. Component of the eukaryotic translation initiation factor 3 (eIF-3) complex, which is involved in protein synthesis of a specialized repertoire of mRNAs and, together with other initiation factors, stimulates binding of mRNA and methionyl-tRNAi to the 40S ribosome. The eIF-3 complex specifically targets and initiates translation of a subset of mRNAs involved in cell proliferation. This is Eukaryotic translation initiation factor 3 subunit J from Debaryomyces hansenii (strain ATCC 36239 / CBS 767 / BCRC 21394 / JCM 1990 / NBRC 0083 / IGC 2968) (Yeast).